The chain runs to 610 residues: Glutamine--fructose-6-phosphate aminotransferase [isomerizing] (610 aa).

Catalysis depends on C2, which acts as the Nucleophile; for GATase activity. In terms of domain architecture, Glutamine amidotransferase type-2 spans 2–219 (CGIVGYAGKK…SGEWGYFSQN (218 aa)). SIS domains lie at 287–431 (SKDV…SDEE) and 459–600 (MSSH…PDQP). K605 functions as the For Fru-6P isomerization activity in the catalytic mechanism.

Homodimer.

Its subcellular location is the cytoplasm. The catalysed reaction is D-fructose 6-phosphate + L-glutamine = D-glucosamine 6-phosphate + L-glutamate. Catalyzes the first step in hexosamine metabolism, converting fructose-6P into glucosamine-6P using glutamine as a nitrogen source. The sequence is that of Glutamine--fructose-6-phosphate aminotransferase [isomerizing] from Leptospira interrogans serogroup Icterohaemorrhagiae serovar copenhageni (strain Fiocruz L1-130).